The chain runs to 175 residues: DM domain-containing protein mab-23 (175 aa).

A DNA-binding region (DM) is located at residues 8–56; the sequence is CQLCANHGIFNQPKKGHKQKCPYRTCPCSLCALNTKRRALDQIERQLKH. The tract at residues 58–93 is disordered; it reads NEPMTGQTATSMASPTPECPLSPTTPKMTPHTPTSG. A compositionally biased stretch (polar residues) spans 59 to 71; the sequence is EPMTGQTATSMAS. A compositionally biased stretch (low complexity) spans 81–91; sequence TTPKMTPHTPT.

As to expression, expressed in a limited number of non-sex-specific tissues in males, including 6-8 unidentified neurons of the head, ventral body wall muscle, and the PHCL/R neurons.

The protein resides in the nucleus. Probable transcription factor that plays a role in the development of the dopaminergic neurons of the male-specific genital sensilla (simple sense organs) known as rays, by negatively regulating the activity of the transcription factor ast-1. Involved in male mating behavior, probably as a result of a role in the differentiation of male-specific diagonal muscles. Required for development of the male proctodeum. May be dispensable in hermaphrodites. The chain is DM domain-containing protein mab-23 from Caenorhabditis elegans.